The chain runs to 251 residues: tRNA pseudouridine synthase A (251 aa).

The active-site Nucleophile is aspartate 52. Position 113 (tyrosine 113) interacts with substrate.

The protein belongs to the tRNA pseudouridine synthase TruA family. As to quaternary structure, homodimer.

It catalyses the reaction uridine(38/39/40) in tRNA = pseudouridine(38/39/40) in tRNA. Formation of pseudouridine at positions 38, 39 and 40 in the anticodon stem and loop of transfer RNAs. In Brucella abortus (strain 2308), this protein is tRNA pseudouridine synthase A.